A 465-amino-acid polypeptide reads, in one-letter code: MNRLPNSASALACTAHALNLIEKRTLTHEEMKALNREVHDYFEQHVNPGFLEYRKSVTAGGDYGAVEWQAGGLNTLVDTQGQEFLDCLGGFGIFNVGHRNPVVVSAVENQLAKQPLHSQELLDPLRAMLAKTLAALTPGKLKYSFFCNSGTESVEAAIKLAKAYQSPRGKFTFVAASGAFHGKSLGALSATAKAAFRKPFMPLLPGFRHVPFGNIDALRELLGECKKTGDDVAAVILEPIQGEGGVILPPSGYLPAVRKLCDEYGALLIFDEVQTGMGRTGKMFACEHENVQPDILCLAKALGGGVMPIGATVATEEVFSVLFDNPFLHTTTFGGNPLACAAALATIHVLLEENLPAQAEQKGDMLLDGFRQLAREYPHLVQEARGRGMLMAIEFVDNETGYRFASEMFRQRVLVAGTLNNAKTIRIEPPLTLTIEQCEQVLTAARRALETLSTAQSTTAVATES.

Residues 150 to 151 and Q274 each bind pyridoxal 5'-phosphate; that span reads GT. K300 carries the N6-(pyridoxal phosphate)lysine modification. T332 contacts pyridoxal 5'-phosphate.

Belongs to the class-III pyridoxal-phosphate-dependent aminotransferase family. Putrescine aminotransferase subfamily. It depends on pyridoxal 5'-phosphate as a cofactor.

It catalyses the reaction an alkane-alpha,omega-diamine + 2-oxoglutarate = an omega-aminoaldehyde + L-glutamate. The catalysed reaction is putrescine + 2-oxoglutarate = 1-pyrroline + L-glutamate + H2O. It carries out the reaction cadaverine + 2-oxoglutarate = 5-aminopentanal + L-glutamate. The protein operates within amine and polyamine degradation; putrescine degradation; 4-aminobutanal from putrescine (transaminase route): step 1/1. In terms of biological role, catalyzes the aminotransferase reaction from putrescine to 2-oxoglutarate, leading to glutamate and 4-aminobutanal, which spontaneously cyclizes to form 1-pyrroline. This is the first step in one of two pathways for putrescine degradation, where putrescine is converted into 4-aminobutanoate (gamma-aminobutyrate or GABA) via 4-aminobutanal. Also functions as a cadaverine transaminase in a a L-lysine degradation pathway to succinate that proceeds via cadaverine, glutarate and L-2-hydroxyglutarate. This Cronobacter sakazakii (strain ATCC BAA-894) (Enterobacter sakazakii) protein is Putrescine aminotransferase.